We begin with the raw amino-acid sequence, 167 residues long: Ribosome maturation factor RimM (167 aa).

The region spanning 94–166 (QNRAWLHELE…YIVVPRFDEF (73 aa)) is the PRC barrel domain.

Belongs to the RimM family. In terms of assembly, binds ribosomal protein uS19.

Its subcellular location is the cytoplasm. An accessory protein needed during the final step in the assembly of 30S ribosomal subunit, possibly for assembly of the head region. Essential for efficient processing of 16S rRNA. May be needed both before and after RbfA during the maturation of 16S rRNA. It has affinity for free ribosomal 30S subunits but not for 70S ribosomes. This Chlorobium phaeovibrioides (strain DSM 265 / 1930) (Prosthecochloris vibrioformis (strain DSM 265)) protein is Ribosome maturation factor RimM.